A 340-amino-acid chain; its full sequence is Selenide, water dikinase (340 aa).

Selenocysteine 17 is a catalytic residue. Selenocysteine 17 is a non-standard amino acid (selenocysteine). ATP is bound by residues lysine 20 and 45–47 (NNE). Aspartate 48 is a Mg(2+) binding site. ATP-binding positions include aspartate 65, aspartate 88, and 136–138 (GHT). A Mg(2+)-binding site is contributed by aspartate 88. Aspartate 224 provides a ligand contact to Mg(2+).

The protein belongs to the selenophosphate synthase 1 family. Class I subfamily. In terms of assembly, homodimer. Mg(2+) serves as cofactor.

The catalysed reaction is hydrogenselenide + ATP + H2O = selenophosphate + AMP + phosphate + 2 H(+). Its function is as follows. Synthesizes selenophosphate from selenide and ATP. In Campylobacter jejuni (strain RM1221), this protein is Selenide, water dikinase.